Reading from the N-terminus, the 778-residue chain is IQ domain-containing protein E (778 aa).

Disordered stretches follow at residues 1–71 and 83–108; these read MSLG…LSSR and SSKQGSVAQPPSPTLTSEHAWTHPPS. Residues 37-49 show a composition bias toward low complexity; sequence KPPSTSPKSPYYS. A compositionally biased stretch (polar residues) spans 83–101; the sequence is SSKQGSVAQPPSPTLTSEH. Positions 157 to 323 form a coiled coil; sequence LHMQKSDVDL…DLDRMLSNSP (167 aa). S322 is subject to Phosphoserine. Disordered stretches follow at residues 348–392, 443–462, 474–529, and 573–612; these read KKVS…EDLP, ETAREGEKGRQEQEQALREE, EEAK…SEER, and LVRSKVPDSRSPSLPGLLSPLNQSSPAPRVLSPISPAEEN. Residues 352-362 show a composition bias toward low complexity; that stretch reads SSESPKQSTSE. The stretch at 398-486 forms a coiled coil; sequence EEQEHLQGTV…KREEKNSFVA (89 aa). 2 consecutive IQ domains span residues 553–582 and 615–644; these read LDEAATVLQAAFRGHLARSKLVRSKVPDSR and QEEAVIVIQSILRGYLAQARFIASCCREIA. Residues 581–598 are compositionally biased toward low complexity; it reads SRSPSLPGLLSPLNQSSP. Positions 651-662 are enriched in polar residues; sequence TVSLTPSGSASP. Residues 651–778 form a disordered region; that stretch reads TVSLTPSGSA…LPRKKSPSPF (128 aa). At S661 the chain carries Phosphoserine. The span at 672–686 shows a compositional bias: basic and acidic residues; it reads IRKELCASEELRETS. Residues 739–752 show a composition bias toward pro residues; it reads PSPPELQPLSPPPV.

Component of the EvC complex composed of EFCAB7, IQCE, EVC2 and EVC; built from two subcomplexes, EVC2:EVC and EFCAB7:IQCE. Interacts (via N-terminus) with EFCAB7 (via EF-hands 1 and 2); this interaction anchors the EVC-EVC2 complex in a signaling microdomain at the base of cilia and stimulates the Hedgehog (Hh) pathway. Interacts with EVC2 (via N-terminal end). Interacts with EVC.

The protein resides in the cell projection. The protein localises to the cilium membrane. Component of the EvC complex that positively regulates ciliary Hedgehog (Hh) signaling. Required for proper limb morphogenesis. This Mus musculus (Mouse) protein is IQ domain-containing protein E (Iqce).